A 918-amino-acid chain; its full sequence is Interleukin-6 receptor subunit beta (918 aa).

The first 22 residues, 1-22 (MSALRIWLMQALLIFLTTESIG), serve as a signal peptide directing secretion. The Extracellular segment spans residues 23-618 (QLVEPCGYIY…TLKFAQGEIE (596 aa)). Residues 26–120 (EPCGYIYPEF…IEQNVYGITI (95 aa)) form the Ig-like C2-type domain. 2 cysteine pairs are disulfide-bonded: cysteine 28–cysteine 54 and cysteine 48–cysteine 103. Asparagine 43, asparagine 61, asparagine 83, and asparagine 131 each carry an N-linked (GlcNAc...) asparagine glycan. Fibronectin type-III domains follow at residues 125 to 215 (PPDI…NFDP), 223 to 323 (PPHN…TYED), 328 to 418 (APSF…IPGS), 422 to 516 (ASHP…LKQA), and 518 to 612 (PSKG…TLKF). Cysteine 134 and cysteine 144 are disulfide-bonded. Residue asparagine 157 is glycosylated (N-linked (GlcNAc...) asparagine). An intrachain disulfide couples cysteine 172 to cysteine 181. 2 N-linked (GlcNAc...) asparagine glycosylation sites follow: asparagine 205 and asparagine 226. The short motif at 309–313 (WSDWS) is the WSXWS motif element. N-linked (GlcNAc...) asparagine glycosylation is found at asparagine 382 and asparagine 389. Cysteine 457 and cysteine 465 are oxidised to a cystine. Residues asparagine 477 and asparagine 552 are each glycosylated (N-linked (GlcNAc...) asparagine). A helical membrane pass occupies residues 619–640 (AIVVPVCLAFLLTTLLGVLFCF). Residues 641–918 (NKRDLIKKHI…TVRQGGYMPQ (278 aa)) are Cytoplasmic-facing. Positions 650–658 (IWPNVPDPS) match the Box 1 motif motif. Disordered stretches follow at residues 659-679 (KSHI…NSKD), 720-754 (TEGH…STAS), 773-795 (VQVF…PEDL), and 817-842 (SCSQ…GSEE). Residues serine 660 and serine 666 each carry the phosphoserine modification. The span at 730–751 (SSCMSSSRPSISSSEENESAQS) shows a compositional bias: low complexity. Over residues 773 to 785 (VQVFSRSESTQPL) the composition is skewed to polar residues. 4 positions are modified to phosphoserine: serine 781, serine 788, serine 828, and serine 838.

Belongs to the type I cytokine receptor family. Type 2 subfamily. In terms of assembly, component of a hexamer of two molecules each of IL6, IL6R and IL6ST; associates with the complex IL6:IL6R but does not interact with IL6. Forms heterodimers composed of LIFR and IL6ST (type I OSM receptor) which are activated by LIF and OSM. Also forms heterodimers composed of OSMR and IL6ST (type II receptor) which are activated by OSM but not by LIF. Interacts with HCK. Interacts with INPP5D/SHIP1. Interacts with SRC and YES. Interacts with ARMH4; this interaction prevents IL6ST protein homodimerization and bridges ARMH4 with IL6R and STAT3 and therefore inhibits phosphorylation of STAT3 at 'Tyr-705'. Phosphorylation of Ser-781 down-regulates cell surface expression. Post-translationally, heavily N-glycosylated. Glycosylation is required for protein stability and localization in plasma membrane but not for ligand binding. As to expression, found in hepatocytes, astrocytes, fibroblasts and endothelial cells.

It localises to the cell membrane. In terms of biological role, signal-transducing molecule. The receptor systems for IL6, LIF, OSM, CNTF, IL11, CTF1 and BSF3 can utilize IL6ST for initiating signal transmission. Binding of IL6 to IL6R induces IL6ST homodimerization and formation of a high-affinity receptor complex, which activates the intracellular JAK-MAPK and JAK-STAT3 signaling pathways. That causes phosphorylation of IL6ST tyrosine residues which in turn activates STAT3. In parallel, the IL6 signaling pathway induces the expression of two cytokine receptor signaling inhibitors, SOCS1 and SOCS3, which inhibit JAK and terminate the activity of the IL6 signaling pathway as a negative feedback loop. Also activates the yes-associated protein 1 (YAP) and NOTCH pathways to control inflammation-induced epithelial regeneration, independently of STAT3. Mediates signals which regulate immune response, hematopoiesis, pain control and bone metabolism. Has a role in embryonic development. Essential for survival of motor and sensory neurons and for differentiation of astrocytes. Required for expression of TRPA1 in nociceptive neurons. Required for the maintenance of PTH1R expression in the osteoblast lineage and for the stimulation of PTH-induced osteoblast differentiation. Required for normal trabecular bone mass and cortical bone composition. This Rattus norvegicus (Rat) protein is Interleukin-6 receptor subunit beta.